A 123-amino-acid polypeptide reads, in one-letter code: Fluoride-specific ion channel FluC (123 aa).

4 helical membrane passes run 3–23 (IAWVALGGAIGAVARYVLSNA), 34–54 (WGTLSVNLLGSFIMGLLFYLF), 67–87 (LVLVGGLGAFTTFSTFSLETL), and 99–119 (LLNMLSSVLLCVLAAYLGLVV). Positions 74 and 77 each coordinate Na(+).

Belongs to the fluoride channel Fluc/FEX (TC 1.A.43) family.

It is found in the cell inner membrane. The catalysed reaction is fluoride(in) = fluoride(out). With respect to regulation, na(+) is not transported, but it plays an essential structural role and its presence is essential for fluoride channel function. Its function is as follows. Fluoride-specific ion channel. Important for reducing fluoride concentration in the cell, thus reducing its toxicity. In Magnetococcus marinus (strain ATCC BAA-1437 / JCM 17883 / MC-1), this protein is Fluoride-specific ion channel FluC.